The following is a 359-amino-acid chain: Histamine H2 receptor (359 aa).

Over 1-22 (MAFNGTVPSFCMDFTVYKVTIS) the chain is Extracellular. The N-linked (GlcNAc...) asparagine glycan is linked to N4. Residues 23–44 (VILIILILVTVAGNVVVCLAVG) traverse the membrane as a helical segment. Over 45–57 (LNRRLRSLTNCFI) the chain is Cytoplasmic. A helical membrane pass occupies residues 58-81 (VSLAVTDLLLGLLVLPFSAIYQLS). Residues 82-92 (CKWSFSKVFCN) are Extracellular-facing. A disulfide bridge links C91 with C174. The chain crosses the membrane as a helical span at residues 93 to 114 (IYTSLDVMLCTASILNLFMISL). At 115 to 134 (DRYCAVTDPLRYPVLITPAR) the chain is on the cytoplasmic side. A helical transmembrane segment spans residues 135–159 (VAISLVFIWVISITLSFLSIHLGWN). The Extracellular portion of the chain corresponds to 160–180 (SRNETSKDNDTIVKCKVQVNE). The chain crosses the membrane as a helical span at residues 181–204 (VYGLVDGLVTFYLPLLIMCITYFR). Residues 205 to 234 (IFKIAREQARRINHIGSWKAATIREHKATV) are Cytoplasmic-facing. Residues 235-258 (TLAAVMGAFIICWFPYFTVFVYRG) traverse the membrane as a helical segment. The Extracellular portion of the chain corresponds to 259–267 (LKGDDAVNE). A helical membrane pass occupies residues 268–289 (VFEDVVLWLGYANSALNPILYA). Residues 290–359 (ALNRDFRTAY…VTAPQGATNR (70 aa)) lie on the Cytoplasmic side of the membrane. C305 carries S-palmitoyl cysteine lipidation.

This sequence belongs to the G-protein coupled receptor 1 family.

The protein resides in the cell membrane. The H2 subclass of histamine receptors mediates gastric acid secretion. The activity of this receptor is mediated by G proteins which activate adenylyl cyclase. This is Histamine H2 receptor (HRH2) from Cavia porcellus (Guinea pig).